Here is a 370-residue protein sequence, read N- to C-terminus: Putative F-box protein At1g47390 (370 aa).

One can recognise an F-box domain in the interval 1–47 (MAPEEKLPCELIEEILSRVPPESLVRFRTVSKKWNALFDDKMFINNH).

This is Putative F-box protein At1g47390 from Arabidopsis thaliana (Mouse-ear cress).